The following is a 304-amino-acid chain: UDP-N-acetylenolpyruvoylglucosamine reductase (304 aa).

In terms of domain architecture, FAD-binding PCMH-type spans 31-196 (KVGGPADYLA…ISAKFNLKPG (166 aa)). Residue Arg175 is part of the active site. Catalysis depends on Ser225, which acts as the Proton donor. Glu295 is a catalytic residue.

It belongs to the MurB family. FAD serves as cofactor.

The protein resides in the cytoplasm. It carries out the reaction UDP-N-acetyl-alpha-D-muramate + NADP(+) = UDP-N-acetyl-3-O-(1-carboxyvinyl)-alpha-D-glucosamine + NADPH + H(+). Its pathway is cell wall biogenesis; peptidoglycan biosynthesis. Cell wall formation. This Streptococcus thermophilus (strain CNRZ 1066) protein is UDP-N-acetylenolpyruvoylglucosamine reductase.